Reading from the N-terminus, the 346-residue chain is Histidinol-phosphate aminotransferase (346 aa).

At Lys-209 the chain carries N6-(pyridoxal phosphate)lysine.

This sequence belongs to the class-II pyridoxal-phosphate-dependent aminotransferase family. Histidinol-phosphate aminotransferase subfamily. Homodimer. Pyridoxal 5'-phosphate serves as cofactor.

It catalyses the reaction L-histidinol phosphate + 2-oxoglutarate = 3-(imidazol-4-yl)-2-oxopropyl phosphate + L-glutamate. Its pathway is amino-acid biosynthesis; L-histidine biosynthesis; L-histidine from 5-phospho-alpha-D-ribose 1-diphosphate: step 7/9. The sequence is that of Histidinol-phosphate aminotransferase from Vibrio cholerae serotype O1 (strain ATCC 39315 / El Tor Inaba N16961).